A 74-amino-acid chain; its full sequence is U3-agatoxin-Ao1g (74 aa).

An N-terminal signal peptide occupies residues 1–20 (MRAIISLLLISTMVFGVIEA). Residues 21–34 (VSVEEGLKIFEGER) constitute a propeptide that is removed on maturation. 4 disulfide bridges follow: Cys37-Cys53, Cys44-Cys58, Cys52-Cys68, and Cys60-Cys66. Asn72 is subject to Asparagine amide.

The protein belongs to the neurotoxin 07 (Beta/delta-agtx) family. 03 (aga-4) subfamily. Aga sub-subfamily. Expressed by the venom gland.

Its subcellular location is the secreted. Functionally, insecticidal neurotoxin that modulates the insect Nav channel (DmNaV1/tipE (para/tipE)) in a unique manner, with both the activation and inactivation processes being affected. The voltage dependence of activation is shifted toward more hyperpolarized potentials (analogous to site 4 toxins) and a non-inactivating persistent sodium current is induced (site 3-like action). Interestingly, both effects take place in a voltage-dependent manner, producing a bell-shaped curve between -80 and 0 mV. This Agelena orientalis (Funnel-web spider) protein is U3-agatoxin-Ao1g.